We begin with the raw amino-acid sequence, 99 residues long: uncharacterized protein (99 aa).

A signal peptide spans 1–19; that stretch reads MLGMIRWVVEGTLVAMLLS. The segment at 71-99 is disordered; the sequence is DGFGRINDSGPKRRGRDQSQYSSRFVELD.

The protein localises to the cytoplasm. This is an uncharacterized protein from Saccharomyces cerevisiae (strain ATCC 204508 / S288c) (Baker's yeast).